The chain runs to 160 residues: Cytochrome b6-f complex subunit 4 (160 aa).

Transmembrane regions (helical) follow at residues 36-56, 95-115, and 127-147; these read ILYM…GLAI, LLGI…PFIE, and PIAM…GAGA.

It belongs to the cytochrome b family. PetD subfamily. As to quaternary structure, the 4 large subunits of the cytochrome b6-f complex are cytochrome b6, subunit IV (17 kDa polypeptide, PetD), cytochrome f and the Rieske protein, while the 4 small subunits are PetG, PetL, PetM and PetN. The complex functions as a dimer.

It localises to the cellular thylakoid membrane. Its function is as follows. Component of the cytochrome b6-f complex, which mediates electron transfer between photosystem II (PSII) and photosystem I (PSI), cyclic electron flow around PSI, and state transitions. The sequence is that of Cytochrome b6-f complex subunit 4 from Synechocystis sp. (strain ATCC 27184 / PCC 6803 / Kazusa).